We begin with the raw amino-acid sequence, 464 residues long: Integrator complex subunit 12 (464 aa).

Positions 42 to 98 are disordered; sequence GNDSVYRPQPKEVEQPKAMLSKVKPETKASSSTPSSSILSKPLASEKVKKEAEKRTA. Residues 69-84 are compositionally biased toward low complexity; that stretch reads KASSSTPSSSILSKPL. Basic and acidic residues predominate over residues 85 to 98; it reads ASEKVKKEAEKRTA. The PHD-type zinc finger occupies 156–212; that stretch reads GLACVVCRQMTVFSGNQLVECQECHNLYHQDCHRPQVTDKDVNDPRLVWYCARCTRQ. Disordered stretches follow at residues 216–252 and 312–445; these read MAQKNQKPSQKPAPSAVSAVTPVAKDPSVNKPELKSK and TNSQ…SQLN. Residues 227–239 show a composition bias toward low complexity; that stretch reads PAPSAVSAVTPVA. A compositionally biased stretch (polar residues) spans 312–329; sequence TNSQATSGKPPSLSSVQK. Low complexity predominate over residues 339–371; the sequence is SKAGSVSKSGSGGSSSTIPLKPLPPLILGKTGL. A compositionally biased stretch (polar residues) spans 372–382; it reads SRSMSSDNVSK. Over residues 384–421 the composition is skewed to low complexity; sequence GLPSPNPSSSGSVSSLSSQLGSNNGSSNTAGSNVNSSN. Residues 428-445 show a composition bias toward polar residues; that stretch reads SMQQSGAKGPTSQESQLN.

It belongs to the Integrator subunit 12 family. In terms of assembly, component of the Integrator complex, composed of core subunits INTS1, INTS2, INTS3, INTS4, INTS5, INTS6, INTS7, INTS8, INTS9/RC74, INTS10, INTS11/CPSF3L, INTS12, INTS13, INTS14 and INTS15. The core complex associates with protein phosphatase 2A subunits PPP2CA and PPP2R1A, to form the Integrator-PP2A (INTAC) complex.

It localises to the nucleus. Its function is as follows. Component of the integrator complex, a multiprotein complex that terminates RNA polymerase II (Pol II) transcription in the promoter-proximal region of genes. The integrator complex provides a quality checkpoint during transcription elongation by driving premature transcription termination of transcripts that are unfavorably configured for transcriptional elongation: the complex terminates transcription by (1) catalyzing dephosphorylation of the C-terminal domain (CTD) of Pol II subunit POLR2A/RPB1 and SUPT5H/SPT5, (2) degrading the exiting nascent RNA transcript via endonuclease activity and (3) promoting the release of Pol II from bound DNA. The integrator complex is also involved in terminating the synthesis of non-coding Pol II transcripts, such as enhancer RNAs (eRNAs), small nuclear RNAs (snRNAs), telomerase RNAs and long non-coding RNAs (lncRNAs). The protein is Integrator complex subunit 12 (ints12) of Xenopus laevis (African clawed frog).